Here is a 236-residue protein sequence, read N- to C-terminus: 2-C-methyl-D-erythritol 4-phosphate cytidylyltransferase (236 aa).

The protein belongs to the IspD/TarI cytidylyltransferase family. IspD subfamily. Homodimer.

It carries out the reaction 2-C-methyl-D-erythritol 4-phosphate + CTP + H(+) = 4-CDP-2-C-methyl-D-erythritol + diphosphate. The protein operates within isoprenoid biosynthesis; isopentenyl diphosphate biosynthesis via DXP pathway; isopentenyl diphosphate from 1-deoxy-D-xylulose 5-phosphate: step 2/6. Functionally, catalyzes the formation of 4-diphosphocytidyl-2-C-methyl-D-erythritol from CTP and 2-C-methyl-D-erythritol 4-phosphate (MEP). In Escherichia coli O139:H28 (strain E24377A / ETEC), this protein is 2-C-methyl-D-erythritol 4-phosphate cytidylyltransferase.